The following is a 372-amino-acid chain: uncharacterized protein (372 aa).

Composition is skewed to basic residues over residues 1–11 and 38–48; these read MNKILGLRRAK and RLRRGMQRLSR. A disordered region spans residues 1–127; sequence MNKILGLRRA…NSGTRDTPCW (127 aa). The span at 50–61 shows a compositional bias: basic and acidic residues; sequence GYGDNRRSRGSE. The segment covering 93 to 104 has biased composition (polar residues); that stretch reads GKTSPCGSSGTP.

This is an uncharacterized protein from Psittacid herpesvirus 1 (isolate Amazon parrot/-/97-0001/1997) (PsHV-1).